Reading from the N-terminus, the 1469-residue chain is Protein BCL9 homolog (1469 aa).

The segment covering 1–16 (MLSTTMPRSPTQQQPQ) has biased composition (polar residues). Disordered stretches follow at residues 1–131 (MLST…NVSA), 161–187 (SNKA…KEEP), 200–222 (EERE…NAQD), 422–442 (ENSK…QSDP), and 454–474 (GGSS…DSIS). Residue Ser9 is modified to Phosphoserine. Thr11 carries the post-translational modification Phosphothreonine. The segment covering 17 to 34 (PNSDASSTSASGSNPGAA) has biased composition (low complexity). Composition is skewed to polar residues over residues 40-60 (SAAS…TLSP) and 90-113 (SGNN…NSCL). Positions 116 to 130 (SPQNSSEHSNSSNVS) are enriched in low complexity. Ser206 is subject to Phosphoserine. The residue at position 208 (Thr208) is a Phosphothreonine. At Ser210 the chain carries Phosphoserine. Composition is skewed to polar residues over residues 422–438 (ENSK…SFVD) and 455–474 (GSSN…DSIS). The ARM-binding stretch occupies residues 511 to 555 (SLQGVKVPDENLTPQQRQHREEQLAKIKKMNQFLFPENENSVGAN). Disordered regions lie at residues 728–830 (GGKP…TSTV), 844–913 (CFQA…RSPV), and 961–991 (QASA…PPPN). Residues 731–745 (PRQVTGTVVPQQQTP) show a composition bias toward low complexity. Polar residues predominate over residues 770 to 781 (IQRSASVPIATQ). The segment covering 782–796 (SPNPSSPNNLSLPSP) has biased composition (low complexity). Composition is skewed to polar residues over residues 806–830 (PTNS…TSTV) and 844–880 (CFQA…TPLS). Phosphoserine occurs at positions 883, 905, and 911. Over residues 904–913 (PSPQGQRSPV) the composition is skewed to polar residues.

The protein belongs to the BCL9 family. Binds to ARM and PYGO.

The protein resides in the nucleus. In terms of biological role, involved in signal transduction through the Wnt pathway. This Drosophila melanogaster (Fruit fly) protein is Protein BCL9 homolog (lgs).